Reading from the N-terminus, the 80-residue chain is uncharacterized protein (80 aa).

This is an uncharacterized protein from Schizosaccharomyces pombe (strain 972 / ATCC 24843) (Fission yeast).